We begin with the raw amino-acid sequence, 65 residues long: Large ribosomal subunit protein bL35 (65 aa).

Residues Met-1–Ser-46 form a disordered region. The span at Ala-25–Arg-45 shows a compositional bias: basic residues.

The protein belongs to the bacterial ribosomal protein bL35 family.

The chain is Large ribosomal subunit protein bL35 from Thioalkalivibrio sulfidiphilus (strain HL-EbGR7).